A 393-amino-acid polypeptide reads, in one-letter code: 4-hydroxyphenylpyruvate dioxygenase (393 aa).

Thr2 carries the post-translational modification N-acetylthreonine. 2 VOC domains span residues 18–152 (HFHS…KMTF) and 180–338 (IIDH…IFTK). His183 lines the Fe cation pocket. A phosphoserine mark is found at Ser211, Ser226, and Ser250. Residues His266 and Glu349 each contribute to the Fe cation site.

It belongs to the 4HPPD family. In terms of assembly, homodimer. Requires Fe cation as cofactor. As to expression, liver.

The protein localises to the cytoplasm. The protein resides in the endoplasmic reticulum membrane. Its subcellular location is the golgi apparatus membrane. The enzyme catalyses 3-(4-hydroxyphenyl)pyruvate + O2 = homogentisate + CO2. It participates in amino-acid degradation; L-phenylalanine degradation; acetoacetate and fumarate from L-phenylalanine: step 3/6. Its function is as follows. Catalyzes the conversion of 4-hydroxyphenylpyruvic acid to homogentisic acid, one of the steps in tyrosine catabolism. This is 4-hydroxyphenylpyruvate dioxygenase (HPD) from Sus scrofa (Pig).